The chain runs to 87 residues: Large ribosomal subunit protein eL31 (87 aa).

This sequence belongs to the eukaryotic ribosomal protein eL31 family.

This chain is Large ribosomal subunit protein eL31, found in Methanosphaerula palustris (strain ATCC BAA-1556 / DSM 19958 / E1-9c).